Consider the following 421-residue polypeptide: O-glycoside alpha-1,2-mannosyltransferase homolog 5 (421 aa).

Catalysis depends on Glu318, which acts as the Nucleophile.

It belongs to the glycosyltransferase 15 family.

The protein localises to the cytoplasm. Probable mannosyltransferase involved in O-glycosylation of cell wall and secreted proteins. The sequence is that of O-glycoside alpha-1,2-mannosyltransferase homolog 5 (omh5) from Schizosaccharomyces pombe (strain 972 / ATCC 24843) (Fission yeast).